The primary structure comprises 167 residues: Lipoprotein signal peptidase (167 aa).

3 helical membrane-spanning segments follow: residues 10–30, 68–88, and 98–118; these read LIWL…KAWV, WQMW…TFWL, and SALP…DRFL. Catalysis depends on residues D124 and D142. The helical transmembrane segment at 138–158 threads the bilayer; that stretch reads FNLADSAIVAGAIGIGLLSLF.

This sequence belongs to the peptidase A8 family.

The protein localises to the cell inner membrane. The enzyme catalyses Release of signal peptides from bacterial membrane prolipoproteins. Hydrolyzes -Xaa-Yaa-Zaa-|-(S,diacylglyceryl)Cys-, in which Xaa is hydrophobic (preferably Leu), and Yaa (Ala or Ser) and Zaa (Gly or Ala) have small, neutral side chains.. It participates in protein modification; lipoprotein biosynthesis (signal peptide cleavage). In terms of biological role, this protein specifically catalyzes the removal of signal peptides from prolipoproteins. The polypeptide is Lipoprotein signal peptidase (Xylella fastidiosa (strain 9a5c)).